The sequence spans 286 residues: uncharacterized protein (286 aa).

Helical transmembrane passes span 30 to 50, 68 to 88, 99 to 119, 136 to 156, 169 to 189, 205 to 225, and 254 to 274; these read LTFMVAAFGIFFIFLVALTVQ, LSTIAVITSFVSLILYFVTAF, WFWALIITDVISYGITLGILL, IVYAFLGASLVFGSVWGLSAL, LFHILLWAFVISIVASLLSFI, IIPGLSLIVGGIFSLISVYFV, and SALFFGAWLISSFMNLVYFIL.

Its subcellular location is the cell membrane. This is an uncharacterized protein from Mycoplasma genitalium (strain ATCC 33530 / DSM 19775 / NCTC 10195 / G37) (Mycoplasmoides genitalium).